The chain runs to 553 residues: Hydroxylamine reductase (553 aa).

Positions 3, 6, 18, and 25 each coordinate [2Fe-2S] cluster. Hybrid [4Fe-2O-2S] cluster contacts are provided by H249, E273, C317, C405, C433, C459, E493, and K495. C405 is modified (cysteine persulfide).

Belongs to the HCP family. The cofactor is [2Fe-2S] cluster. It depends on hybrid [4Fe-2O-2S] cluster as a cofactor.

It localises to the cytoplasm. It carries out the reaction A + NH4(+) + H2O = hydroxylamine + AH2 + H(+). Its function is as follows. Catalyzes the reduction of hydroxylamine to form NH(3) and H(2)O. The sequence is that of Hydroxylamine reductase from Mannheimia succiniciproducens (strain KCTC 0769BP / MBEL55E).